The primary structure comprises 493 residues: Cytochrome P450 Tp9025 (493 aa).

Residues 1–21 (MALYIIFLLIASSFILFSFIF) traverse the membrane as a helical; Signal-anchor for type II membrane protein segment. 2 N-linked (GlcNAc...) asparagine glycosylation sites follow: Asn-209 and Asn-411. Cys-433 is a binding site for heme.

It belongs to the cytochrome P450 family. Heme is required as a cofactor.

The protein localises to the membrane. Its pathway is secondary metabolite biosynthesis; terpenoid biosynthesis. In terms of biological role, probably involved in the biosynthesis of germacrene-derived sesquiterpene lactones. The sequence is that of Cytochrome P450 Tp9025 from Tanacetum parthenium (Feverfew).